A 718-amino-acid polypeptide reads, in one-letter code: Catalase-peroxidase (718 aa).

The tryptophyl-tyrosyl-methioninium (Trp-Tyr) (with M-246) cross-link spans 92–220 (WHAAGTYRTA…LASVMMGLIY (129 aa)). Residue histidine 93 is the Proton acceptor of the active site. A cross-link (tryptophyl-tyrosyl-methioninium (Tyr-Met) (with W-92)) is located at residues 220–246 (YVNPEGVDGHPDPLKTANDVRVTFERM). Heme b is bound at residue histidine 261.

Belongs to the peroxidase family. Peroxidase/catalase subfamily. Homodimer or homotetramer. Requires heme b as cofactor. Formation of the three residue Trp-Tyr-Met cross-link is important for the catalase, but not the peroxidase activity of the enzyme.

It carries out the reaction H2O2 + AH2 = A + 2 H2O. The enzyme catalyses 2 H2O2 = O2 + 2 H2O. Bifunctional enzyme with both catalase and broad-spectrum peroxidase activity. This Shewanella halifaxensis (strain HAW-EB4) protein is Catalase-peroxidase.